We begin with the raw amino-acid sequence, 487 residues long: N-succinylglutamate 5-semialdehyde dehydrogenase (487 aa).

Residue 221-226 (GSSRTG) coordinates NAD(+). Residues E244 and C278 contribute to the active site.

Belongs to the aldehyde dehydrogenase family. AstD subfamily.

It carries out the reaction N-succinyl-L-glutamate 5-semialdehyde + NAD(+) + H2O = N-succinyl-L-glutamate + NADH + 2 H(+). The protein operates within amino-acid degradation; L-arginine degradation via AST pathway; L-glutamate and succinate from L-arginine: step 4/5. Its function is as follows. Catalyzes the NAD-dependent reduction of succinylglutamate semialdehyde into succinylglutamate. The polypeptide is N-succinylglutamate 5-semialdehyde dehydrogenase (astD) (Pseudomonas aeruginosa (strain ATCC 15692 / DSM 22644 / CIP 104116 / JCM 14847 / LMG 12228 / 1C / PRS 101 / PAO1)).